Reading from the N-terminus, the 273-residue chain is 2,3,4,5-tetrahydropyridine-2,6-dicarboxylate N-succinyltransferase (273 aa).

R104 and D141 together coordinate substrate.

Belongs to the transferase hexapeptide repeat family. In terms of assembly, homotrimer.

The protein resides in the cytoplasm. It carries out the reaction (S)-2,3,4,5-tetrahydrodipicolinate + succinyl-CoA + H2O = (S)-2-succinylamino-6-oxoheptanedioate + CoA. It functions in the pathway amino-acid biosynthesis; L-lysine biosynthesis via DAP pathway; LL-2,6-diaminopimelate from (S)-tetrahydrodipicolinate (succinylase route): step 1/3. In Azoarcus sp. (strain BH72), this protein is 2,3,4,5-tetrahydropyridine-2,6-dicarboxylate N-succinyltransferase.